A 421-amino-acid chain; its full sequence is Forkhead box protein fkh-4 (421 aa).

Positions 118–218 (RPPISYVALC…SDADFDFFRK (101 aa)) form a DNA-binding region, fork-head.

It localises to the nucleus. In terms of biological role, transcription factor. Regulates expression of a class of small RNAs, known as 21U-RNAs, perhaps acting redundantly with fkh-3 and fkh-5. This is Forkhead box protein fkh-4 from Caenorhabditis elegans.